Here is a 151-residue protein sequence, read N- to C-terminus: Arginine regulator (151 aa).

This sequence belongs to the ArgR family.

The protein localises to the cytoplasm. Its pathway is amino-acid degradation; L-arginine degradation via ADI pathway. Its function is as follows. Regulates the transcription of the arc operon, involved in arginine catabolism. This is Arginine regulator (argR1) from Clostridium perfringens (strain 13 / Type A).